The chain runs to 489 residues: Major aspartyl peptidase 1 (489 aa).

The N-terminal stretch at 1 to 16 is a signal peptide; it reads MHYLAVALPLLTLALA. Residues 101 to 432 form the Peptidase A1 domain; it reads YAGQVSIGTP…RYNPAAIGFA (332 aa). Residue aspartate 119 is part of the active site. Glycine 121 serves as a coordination point for pepstatin A. A disulfide bridge connects residues cysteine 132 and cysteine 137. Residues threonine 161, glycine 163, and serine 164 each contribute to the pepstatin A site. Residue asparagine 266 is glycosylated (N-linked (GlcNAc...) asparagine). Position 286 (tyrosine 286) interacts with pepstatin A. The active site involves aspartate 317. Pepstatin A contacts are provided by threonine 320 and threonine 321. Cysteine 357 and cysteine 391 are oxidised to a cystine. Residues 442 to 466 are disordered; it reads AGNPSSSTTGGGTSGSNGGGSSSGA. Residues 450–463 show a composition bias toward gly residues; the sequence is TGGGTSGSNGGGSS. Positions 456 to 489 are cleaved as a propeptide — removed at pH 5.0; by autocatalysis; it reads GSNGGGSSSGAMERKGVQLGWLVGAVAVGVAAMI.

The protein belongs to the peptidase A1 family. Monomer. Post-translationally, activated by the autocatalytic cleavage of the propeptide. Cleaved at the end of the propeptide promiscuously from residue 76 to residue 79. C-terminal cleavage by autocatalysis at Gly-456 at the pH optimum indicating a possible regulatory or other function of this propeptide.

The protein resides in the secreted. Activated by low pH. Inhibited by pepstatin A with an IC(50) of 1.4 nM. Inhibited by acetyl pepstatin. Inhibited by HIV antiretroviral therapy protease inhibitors including amprenavir and ritonavir. Inhibited by HIV-1 protease inhibitor brecanavir with an approximate IC(50) of 352 nM. Inhibited by HIV-1 protease inhibitors CGP53437 and GS-8374. From the tested peptidomimetic inhibitor molecules, macrocycles containing P2-P3' tethered side chains, statines in P1 and an alpha amino acid in P2' are the best. From the linear peptidomimetic inhibitors, the ones with a phenylstatine or hydroxyethylamine scissile bond isoster are better than compounds with a reduced bond or a homo-amide. Overall, inhibitors with a phenylalanine side chain, either unsubstituted or with a small substituent, is preferred in P1 while a bulkier P1 side chain leads to lower inhibition. Possesses prevalent extracellular endopeptidase activity at low pH condition. Required for high-density growth in acidic environments. Broad substrate specificity with preference cleavage of the peptide substrate between hydrophobic amino acids. Cleaves substrate at P1-P1' between Phe-Leu. Positively charged amino acids are preferred at P2. Prefers hydrophobic amino acids at the P3 and P4 positions. Cleaves substrate also at P1'-P2' between Leu-Val to some degree. Required for virulence in mouse inhalation model of infection. This chain is Major aspartyl peptidase 1, found in Cryptococcus neoformans var. grubii serotype A (strain H99 / ATCC 208821 / CBS 10515 / FGSC 9487) (Filobasidiella neoformans var. grubii).